A 184-amino-acid polypeptide reads, in one-letter code: Ribosome-recycling factor (184 aa).

The span at 133 to 162 shows a compositional bias: basic and acidic residues; it reads RDGMDNLKQDENKKEISEDERKRHETEVQK. The interval 133-163 is disordered; it reads RDGMDNLKQDENKKEISEDERKRHETEVQKL.

Belongs to the RRF family.

It is found in the cytoplasm. Responsible for the release of ribosomes from messenger RNA at the termination of protein biosynthesis. May increase the efficiency of translation by recycling ribosomes from one round of translation to another. This is Ribosome-recycling factor from Sphingopyxis alaskensis (strain DSM 13593 / LMG 18877 / RB2256) (Sphingomonas alaskensis).